The sequence spans 157 residues: Protein Smg (157 aa).

It belongs to the Smg family.

This Pectobacterium carotovorum subsp. carotovorum (strain PC1) protein is Protein Smg.